Consider the following 404-residue polypeptide: CD209 antigen (404 aa).

The Cytoplasmic segment spans residues 1-37 (MSDSKEPRLQQLDLLEEEQLGGVGFRQTRGYKSLAGC). Short sequence motifs (endocytosis signal) lie at residues 14-15 (LL), 16-18 (EEE), and 31-34 (YKSL). The helical; Signal-anchor for type II membrane protein transmembrane segment at 38–58 (LGHGPLVLQLLSFTLLAGLLV) threads the bilayer. The Extracellular segment spans residues 59-404 (QVSKVPSSLS…APTTPNPPPA (346 aa)). Residue Asn80 is glycosylated (N-linked (GlcNAc...) asparagine). 7 repeat units span residues 96 to 118 (KQQE…PEKS), 119 to 141 (KQQE…PEKS), 142 to 164 (KLQE…PEKS), 165 to 187 (KMQE…PEKS), 188 to 210 (KQQE…PEKS), 211 to 233 (KQQE…PDRS), and 234 to 257 (KQQE…HPCP). The 7 X approximate tandem repeats stretch occupies residues 96-257 (KQQEIYQELT…AVERLCHPCP (162 aa)). Intrachain disulfides connect Cys256–Cys267, Cys284–Cys377, and Cys356–Cys369. Residues 263-378 (FQGNCYFMSN…CNLAKFWICK (116 aa)) enclose the C-type lectin domain. Glu347, Asn349, Ile351, Glu354, Asn365, and Asp366 together coordinate Ca(2+). Residues 382–404 (ASCSGDEERLLSPAPTTPNPPPA) are disordered.

In terms of assembly, homotetramer. Interacts with C1QBP; the interaction is indicative for a C1q:C1QBP:CD209 signaling complex. Interacts with ICAM2 and ICAM3 by binding to mannose-like carbohydrates. Interacts (via C-type lectin domain) with CEACAM1 (via Lewis X moieties); this interaction is regulated by the glycosylation pattern of CEACAM1 on cell types and regulates contact between dendritic cells and neutrophils.

The protein resides in the membrane. Its function is as follows. Pathogen-recognition receptor expressed on the surface of immature dendritic cells (DCs) and involved in initiation of primary immune response. Thought to mediate the endocytosis of pathogens which are subsequently degraded in lysosomal compartments. The receptor returns to the cell membrane surface and the pathogen-derived antigens are presented to resting T-cells via MHC class II proteins to initiate the adaptive immune response. Probably recognizes in a calcium-dependent manner high mannose N-linked oligosaccharides in a variety of pathogen antigens. Functionally, on DCs it is a high affinity receptor for ICAM2 and ICAM3 by binding to mannose-like carbohydrates. May act as a DC rolling receptor that mediates transendothelial migration of DC presursors from blood to tissues by binding endothelial ICAM2. Seems to regulate DC-induced T-cell proliferation by binding to ICAM3 on T-cells in the immunological synapse formed between DC and T-cells. This Macaca mulatta (Rhesus macaque) protein is CD209 antigen (CD209).